Consider the following 312-residue polypeptide: Beta-ketoacyl-[acyl-carrier-protein] synthase III (312 aa).

Catalysis depends on residues Cys112 and His237. Positions 238-242 (QANIR) are ACP-binding. Asn267 is a catalytic residue.

It belongs to the thiolase-like superfamily. FabH family. Homodimer.

Its subcellular location is the cytoplasm. It catalyses the reaction malonyl-[ACP] + acetyl-CoA + H(+) = 3-oxobutanoyl-[ACP] + CO2 + CoA. Its pathway is lipid metabolism; fatty acid biosynthesis. Its function is as follows. Catalyzes the condensation reaction of fatty acid synthesis by the addition to an acyl acceptor of two carbons from malonyl-ACP. Catalyzes the first condensation reaction which initiates fatty acid synthesis and may therefore play a role in governing the total rate of fatty acid production. Possesses both acetoacetyl-ACP synthase and acetyl transacylase activities. Its substrate specificity determines the biosynthesis of branched-chain and/or straight-chain of fatty acids. This is Beta-ketoacyl-[acyl-carrier-protein] synthase III from Bacillus pumilus (strain SAFR-032).